The following is a 338-amino-acid chain: NADPH dehydrogenase (338 aa).

22 to 25 (SPMC) lines the FMN pocket. Tyrosine 27 is a substrate binding site. FMN is bound by residues alanine 59 and glutamine 101. 163 to 166 (HAAH) serves as a coordination point for substrate. Residues arginine 214 and 306 to 307 (GR) contribute to the FMN site.

It belongs to the NADH:flavin oxidoreductase/NADH oxidase family. NamA subfamily. In terms of assembly, homotetramer. The cofactor is FMN.

It catalyses the reaction A + NADPH + H(+) = AH2 + NADP(+). In terms of biological role, catalyzes the reduction of the double bond of an array of alpha,beta-unsaturated aldehydes and ketones. It also reduces the nitro group of nitroester and nitroaromatic compounds. It could have a role in detoxification processes. In Listeria welshimeri serovar 6b (strain ATCC 35897 / DSM 20650 / CCUG 15529 / CIP 8149 / NCTC 11857 / SLCC 5334 / V8), this protein is NADPH dehydrogenase.